A 54-amino-acid polypeptide reads, in one-letter code: Gene product 16.6 (54 aa).

This sequence belongs to the phi29likevirus gp16.6 family.

The polypeptide is Gene product 16.6 (16.6) (Bacillus subtilis (Bacteriophage phi-15)).